A 246-amino-acid polypeptide reads, in one-letter code: MTNNAAAPLYSLRGLPLIGWRDMSHALNYLFADGQLKQGTLVAINAEKLLTAEDNPEVRALIAAAEFKYADGISVVRSIRKKFPQAQVSRVAGADLWEALMARAGKEGTPVFLVGGKPEVLAQTEAKLRTQWNVNIVGSQDGYFTPEQRQALFARIHASGAKIVTVAMGSPKQELLMRDCREVHPHALYMGVGGTYDVFTGHVKRAPKIWQNLGLEWLYRLLSQPKRITRQVRLLRYLRWHYTGDL.

The protein belongs to the glycosyltransferase 26 family.

It catalyses the reaction UDP-N-acetyl-alpha-D-mannosaminouronate + N-acetyl-alpha-D-glucosaminyl-di-trans,octa-cis-undecaprenyl diphosphate = beta-D-ManNAcA-(1-&gt;4)-alpha-D-GlcNAc-di-trans,octa-cis-undecaprenyl diphosphate + UDP + H(+). Its pathway is bacterial outer membrane biogenesis; enterobacterial common antigen biosynthesis. Its function is as follows. Catalyzes the synthesis of Und-PP-GlcNAc-ManNAcA (Lipid II), the second lipid-linked intermediate involved in enterobacterial common antigen (ECA) synthesis. The chain is UDP-N-acetyl-D-mannosaminuronic acid transferase from Salmonella agona (strain SL483).